Consider the following 66-residue polypeptide: Large ribosomal subunit protein uL29 (66 aa).

Belongs to the universal ribosomal protein uL29 family.

The chain is Large ribosomal subunit protein uL29 from Thermococcus sibiricus (strain DSM 12597 / MM 739).